Here is a 253-residue protein sequence, read N- to C-terminus: 3-deoxy-manno-octulosonate cytidylyltransferase (253 aa).

It belongs to the KdsB family.

It localises to the cytoplasm. The catalysed reaction is 3-deoxy-alpha-D-manno-oct-2-ulosonate + CTP = CMP-3-deoxy-beta-D-manno-octulosonate + diphosphate. The protein operates within nucleotide-sugar biosynthesis; CMP-3-deoxy-D-manno-octulosonate biosynthesis; CMP-3-deoxy-D-manno-octulosonate from 3-deoxy-D-manno-octulosonate and CTP: step 1/1. Its pathway is bacterial outer membrane biogenesis; lipopolysaccharide biosynthesis. Functionally, activates KDO (a required 8-carbon sugar) for incorporation into bacterial lipopolysaccharide in Gram-negative bacteria. This is 3-deoxy-manno-octulosonate cytidylyltransferase from Acinetobacter baumannii (strain AYE).